The sequence spans 239 residues: Serine protease SplC (239 aa).

The signal sequence occupies residues 1–36 (MNKNIVIKSMAALAILTSVTGINAAVVEETQQIANA). Active-site charge relay system residues include His75, Asp113, and Ser193.

This sequence belongs to the peptidase S1B family.

Its subcellular location is the secreted. In Staphylococcus aureus (strain USA300 / TCH1516), this protein is Serine protease SplC (splC).